We begin with the raw amino-acid sequence, 215 residues long: Flagellin B1 (215 aa).

The propeptide occupies 1–12 (MSVKNFMNNKKG).

It belongs to the archaeal flagellin family.

The protein resides in the archaeal flagellum. Its function is as follows. Flagellin is the subunit protein which polymerizes to form the filaments of archaeal flagella. The protein is Flagellin B1 (flaB1) of Methanococcus vannielii (strain ATCC 35089 / DSM 1224 / JCM 13029 / OCM 148 / SB).